Reading from the N-terminus, the 135-residue chain is Lactoylglutathione lyase (135 aa).

The region spanning 2–126 (RLLHTMLRVG…DGYKIELIEA (125 aa)) is the VOC domain. Histidine 5 provides a ligand contact to Ni(2+). A substrate-binding site is contributed by arginine 9. Position 56 (glutamate 56) interacts with Ni(2+). Substrate is bound by residues asparagine 60 and histidine 74. The Ni(2+) site is built by histidine 74 and glutamate 122. The active-site Proton donor/acceptor is glutamate 122.

It belongs to the glyoxalase I family. Homodimer. Ni(2+) serves as cofactor.

It carries out the reaction (R)-S-lactoylglutathione = methylglyoxal + glutathione. Its pathway is secondary metabolite metabolism; methylglyoxal degradation; (R)-lactate from methylglyoxal: step 1/2. Catalyzes the conversion of hemimercaptal, formed from methylglyoxal and glutathione, to S-lactoylglutathione. This is Lactoylglutathione lyase (gloA) from Salmonella typhi.